Reading from the N-terminus, the 495-residue chain is MAESQLSCLDEAHVNERVTEAHAAFYYCERRRAALEALLGGGEQAYRELVKKERLRDFLSSQERQALCAAWSPYEEAVSSTRAKAKAKAKFPAQPTESLAYWPDRSDTEVPPLDLGWTDTNFYRGVSRVTLFTHPPKEEKAPHLKQVVRQMIQQAQKVIAVVMDLFTDGDIFQDIVDAACKRRVPVYIILDEGGVKYFLEMCQGLELADFRIRNIRVRSVTGIGFYMPMGKIKGTLSSKFLMVDGDKVATGSFSFTWSSSYVDRNLLLLLTGQNMEPFDIEFRELYAISEEVNLHQHLGLAGRIGLNYSSTVARKLINPKYALVAGTRRPPGEMMRWAARQQREAGGNVEGQEEGSGGGESARRLESFLNDLVTVEQILPTVEPISPRLQRPTNGRPVSHAHTDAKHRSREALPQNGKGEAANGEATPAKEGKRFSSRLFSRRVKRPAVPSSMASSPSTETFADVEFPLGKRHNEGSNANISGKGITKASNCVIS.

Ala2 is subject to N-acetylalanine. The segment at 2-294 is DUF1669; it reads AESQLSCLDE…LYAISEEVNL (293 aa). Phosphoserine is present on Ser4. Disordered regions lie at residues 341–362 and 384–495; these read QQREAGGNVEGQEEGSGGGESA and PISP…CVIS. The span at 447–458 shows a compositional bias: low complexity; sequence PAVPSSMASSPS. Phosphoserine is present on Ser477.

The protein belongs to the FAM83 family. Directly interacts (via DUF1669) with CSNK1A1 and CSNK1A1L.

Its subcellular location is the cell membrane. The polypeptide is Protein FAM83F (Fam83f) (Mus musculus (Mouse)).